The primary structure comprises 258 residues: Regulatory protein RecX (258 aa).

It belongs to the RecX family.

The protein localises to the cytoplasm. In terms of biological role, modulates RecA activity. The chain is Regulatory protein RecX from Streptococcus thermophilus (strain ATCC BAA-491 / LMD-9).